Here is a 92-residue protein sequence, read N- to C-terminus: MGRSLKKGPFCDEHLMKKIEKLNETGQKQVIKTWSRRSTIFPQFVGHTIAVYDGRRHVPVYITEDMVGHKLGEFAPTATFRGHAGDDKKTKR.

Belongs to the universal ribosomal protein uS19 family.

In terms of biological role, protein S19 forms a complex with S13 that binds strongly to the 16S ribosomal RNA. The protein is Small ribosomal subunit protein uS19 (rpsS) of Geobacillus stearothermophilus (Bacillus stearothermophilus).